Consider the following 137-residue polypeptide: uncharacterized protein (137 aa).

The HTH merR-type domain occupies 4–73 (MLTVSEVARK…LEEIADILHL (70 aa)). A DNA-binding region (H-T-H motif) is located at residues 8-27 (SEVARKLGLNPQTLYFYERI).

This is an uncharacterized protein from Synechocystis sp. (strain ATCC 27184 / PCC 6803 / Kazusa).